The primary structure comprises 508 residues: Cytochrome P450 monooxygenase lepD (508 aa).

A helical membrane pass occupies residues 22 to 42; the sequence is IAAAVAVVASIVIYLALSSFF. Asparagine 53 and asparagine 416 each carry an N-linked (GlcNAc...) asparagine glycan. Position 454 (cysteine 454) interacts with heme.

Belongs to the cytochrome P450 family. The cofactor is heme.

It is found in the membrane. In terms of biological role, cytochrome P450 monooxygenase; part of the gene cluster 23 that mediates the biosynthesis of a family of 2-pyridones known as leporins. The hybrid PKS-NRPS synthetase lepA and the enoyl reductase lepG are responsible for fusion of phenylalanine with a hexaketide and subsequent release of the stable tetramic acid precursor, pre-leporin C. Because lepA lacks a designated enoylreductase (ER) domain, the required activity is provided the enoyl reductase lepG. It is possible that the dehydrogenase lepF also participates in production of pre-leporin C. Cytochrome P450 monooxygenase lepH is then required for the ring expansion step to yield leporin C. Leporin C is then presumably further oxidized by the N-hydroxylase lepD to form leporin B. LepI may possess a function in biosynthesis upstream of lepA. Leporin B is further oxidized in the presence of ferric ion to give the leporin B trimer-iron chelate, but whether or not this reaction is catalyzed by an enzyme in the pathway or by ferric ion is not determined yet. The polypeptide is Cytochrome P450 monooxygenase lepD (Aspergillus flavus (strain ATCC 200026 / FGSC A1120 / IAM 13836 / NRRL 3357 / JCM 12722 / SRRC 167)).